The chain runs to 124 residues: Multifunctional methyltransferase subunit TRM112 homolog B (124 aa).

The 119-residue stretch at 2–120 folds into the TRM112 domain; the sequence is RLIVHNMLSC…SKGIPNMLLH (119 aa).

It belongs to the TRM112 family. As to quaternary structure, interacts with TRM9. In terms of tissue distribution, expressed in anthers.

In terms of biological role, acts as an activator of both rRNA/tRNA and protein methyltransferases. Required for TRM9 tRNA methyltransferase activity. The protein is Multifunctional methyltransferase subunit TRM112 homolog B of Arabidopsis thaliana (Mouse-ear cress).